The sequence spans 136 residues: Large ribosomal subunit protein eL27A (136 aa).

It belongs to the eukaryotic ribosomal protein eL27 family. In terms of assembly, component of the large ribosomal subunit (LSU). Mature yeast ribosomes consist of a small (40S) and a large (60S) subunit. The 40S small subunit contains 1 molecule of ribosomal RNA (18S rRNA) and at least 33 different proteins. The large 60S subunit contains 3 rRNA molecules (25S, 5.8S and 5S rRNA) and at least 46 different proteins.

The protein localises to the cytoplasm. It is found in the nucleus. Component of the ribosome, a large ribonucleoprotein complex responsible for the synthesis of proteins in the cell. The small ribosomal subunit (SSU) binds messenger RNAs (mRNAs) and translates the encoded message by selecting cognate aminoacyl-transfer RNA (tRNA) molecules. The large subunit (LSU) contains the ribosomal catalytic site termed the peptidyl transferase center (PTC), which catalyzes the formation of peptide bonds, thereby polymerizing the amino acids delivered by tRNAs into a polypeptide chain. The nascent polypeptides leave the ribosome through a tunnel in the LSU and interact with protein factors that function in enzymatic processing, targeting, and the membrane insertion of nascent chains at the exit of the ribosomal tunnel. This chain is Large ribosomal subunit protein eL27A (rpl2701), found in Schizosaccharomyces pombe (strain 972 / ATCC 24843) (Fission yeast).